Here is a 541-residue protein sequence, read N- to C-terminus: MIWHVQNENFILDSTRIFMKAFHLLLFDGSLIFPECILIFGLILLLMIDSSSDQKDIPWLYFIPSTSLVMSITALLFRWREEPMISFSGNFQTNNFNEIFQFLILLCSTLCIPLSVEYIECTEMAITEFLLFVLTATLGGMFLCGANDFITIFVAPECFSLCSYLLSGYTKKDVRSNEATMKYLLMGGASSSILVHGFSWLYGSSGGEIELQEIVNGLINTQMYNSPGISIALIFITVGIGFKLSPAPSHQWTPDVYEGVRFVREIPTSLSISEMFGFFKTPWTCRREILSPTPVVAFLSVTSKVAASASATRIFDIPFYFSSNGWHLLLEILAILSMILGNLIAITQTSMKRMLAYSSIGQIGYVIIGIIVGDSNDGYASMITYMLFYISMNLGTFACIVLFGLRTGTDNIRDYAGLYTKDPFLALSLALCLLSLGGLPPLAGFFGKLYLFWCGWQAGLYFLVLIGLLTSVVSIYYYLKIIKLLMTGRNQEITPHVRNYRRSPLRSNNSIELSMIVCVIASTIPGISMNPIIAIAQDSLF.

14 consecutive transmembrane segments (helical) span residues 24–44 (LLLFDGSLIFPECILIFGLIL), 57–77 (IPWLYFIPSTSLVMSITALLF), 99–119 (IFQFLILLCSTLCIPLSVEYI), 124–144 (MAITEFLLFVLTATLGGMFLC), 149–169 (FITIFVAPECFSLCSYLLSGY), 183–203 (YLLMGGASSSILVHGFSWLYG), 227–247 (PGISIALIFITVGIGFKLSPA), 289–309 (ILSPTPVVAFLSVTSKVAASA), 326–346 (WHLLLEILAILSMILGNLIAI), 354–374 (MLAYSSIGQIGYVIIGIIVGD), 385–405 (YMLFYISMNLGTFACIVLFGL), 426–446 (ALSLALCLLSLGGLPPLAGFF), 449–469 (LYLFWCGWQAGLYFLVLIGLL), and 515–535 (MIVCVIASTIPGISMNPIIAI).

It belongs to the complex I subunit 2 family. As to quaternary structure, NDH is composed of at least 16 different subunits, 5 of which are encoded in the nucleus.

It localises to the plastid. The protein resides in the chloroplast thylakoid membrane. The enzyme catalyses a plastoquinone + NADH + (n+1) H(+)(in) = a plastoquinol + NAD(+) + n H(+)(out). The catalysed reaction is a plastoquinone + NADPH + (n+1) H(+)(in) = a plastoquinol + NADP(+) + n H(+)(out). Its function is as follows. NDH shuttles electrons from NAD(P)H:plastoquinone, via FMN and iron-sulfur (Fe-S) centers, to quinones in the photosynthetic chain and possibly in a chloroplast respiratory chain. The immediate electron acceptor for the enzyme in this species is believed to be plastoquinone. Couples the redox reaction to proton translocation, and thus conserves the redox energy in a proton gradient. This is NAD(P)H-quinone oxidoreductase subunit 2 A, chloroplastic from Coffea arabica (Arabian coffee).